The chain runs to 215 residues: Small ribosomal subunit protein uS3 (215 aa).

Residues 38-107 enclose the KH type-2 domain; the sequence is IRDYIKKTYH…KFQLNIEEVK (70 aa).

This sequence belongs to the universal ribosomal protein uS3 family. As to quaternary structure, part of the 30S ribosomal subunit. Forms a tight complex with proteins S10 and S14.

Its function is as follows. Binds the lower part of the 30S subunit head. Binds mRNA in the 70S ribosome, positioning it for translation. This chain is Small ribosomal subunit protein uS3, found in Kosmotoga olearia (strain ATCC BAA-1733 / DSM 21960 / TBF 19.5.1).